A 432-amino-acid chain; its full sequence is Protein ABHD8 (432 aa).

Disordered regions lie at residues 47–69 and 121–149; these read KHAG…QGDQ and PAGS…RPKR. Residues 52–61 show a composition bias toward pro residues; sequence APAPTPPPPL. Positions 139–149 are enriched in basic residues; the sequence is GRRRRARRPKR. The 103-residue stretch at 170–272 folds into the AB hydrolase-1 domain; the sequence is VLFFIHGVGG…HKVIMINGGG (103 aa). Residues S245, D363, and H391 each act as charge relay system in the active site.

It belongs to the AB hydrolase superfamily. As to quaternary structure, interacts with NLRP3 (via NACHT and LLR domains); this interaction is enhanced in the presence of NLRP3 inflammasome inducers, such as ATP, nigericin, silica, or alum. Interacts with ZDHHC12.

It is found in the cytoplasm. Its function is as follows. Negatively regulates NLRP3-driven inflammation. Promotes NLRP3 degradation through the chaperone-mediated autophagy (CMA) pathway, hence attenuating inflammasome activation and IL1B secretion. Acts by recruiting palmitoyltransferase ZDHHC12 to NLRP3, facilitating NLRP3 palmitoylation and subsequent degradation. The chain is Protein ABHD8 from Bos taurus (Bovine).